The sequence spans 311 residues: S-adenosyl-L-methionine-dependent tRNA 4-demethylwyosine synthase (311 aa).

[4Fe-4S] cluster-binding residues include C26, C39, C52, C62, C66, and C69. The region spanning 45–283 (YGIETHRCIQ…LKLAKMLDEN (239 aa)) is the Radical SAM core domain.

This sequence belongs to the TYW1 family. Monomer. [4Fe-4S] cluster is required as a cofactor.

The protein localises to the cytoplasm. It carries out the reaction N(1)-methylguanosine(37) in tRNA(Phe) + pyruvate + S-adenosyl-L-methionine = 4-demethylwyosine(37) in tRNA(Phe) + 5'-deoxyadenosine + L-methionine + CO2 + H2O. Component of the wyosine derivatives biosynthesis pathway that catalyzes the condensation of N-methylguanine with 2 carbon atoms from pyruvate to form the tricyclic 4-demethylwyosine (imG-14) on guanosine-37 of tRNA(Phe). This chain is S-adenosyl-L-methionine-dependent tRNA 4-demethylwyosine synthase, found in Methanocaldococcus jannaschii (strain ATCC 43067 / DSM 2661 / JAL-1 / JCM 10045 / NBRC 100440) (Methanococcus jannaschii).